Reading from the N-terminus, the 273-residue chain is Phosphatidylglycerol--prolipoprotein diacylglyceryl transferase (273 aa).

A run of 7 helical transmembrane segments spans residues 19–39, 55–75, 90–110, 125–145, 174–194, 202–222, and 230–250; these read VHWY…LASY, LVFY…VLFY, VWTG…AMIL, FIAP…FIGA, PSQI…LWWF, MAVS…VEFF, and GFIL…MLLI. Residue Arg-138 participates in a 1,2-diacyl-sn-glycero-3-phospho-(1'-sn-glycerol) binding.

Belongs to the Lgt family.

Its subcellular location is the cell inner membrane. It catalyses the reaction L-cysteinyl-[prolipoprotein] + a 1,2-diacyl-sn-glycero-3-phospho-(1'-sn-glycerol) = an S-1,2-diacyl-sn-glyceryl-L-cysteinyl-[prolipoprotein] + sn-glycerol 1-phosphate + H(+). Its pathway is protein modification; lipoprotein biosynthesis (diacylglyceryl transfer). Its function is as follows. Catalyzes the transfer of the diacylglyceryl group from phosphatidylglycerol to the sulfhydryl group of the N-terminal cysteine of a prolipoprotein, the first step in the formation of mature lipoproteins. The polypeptide is Phosphatidylglycerol--prolipoprotein diacylglyceryl transferase (Acinetobacter baylyi (strain ATCC 33305 / BD413 / ADP1)).